A 461-amino-acid polypeptide reads, in one-letter code: Cysteine--tRNA ligase (461 aa).

Zn(2+) is bound at residue cysteine 28. The 'HIGH' region signature appears at 30-40; that stretch reads MTVYDYCHLGH. 3 residues coordinate Zn(2+): cysteine 212, histidine 237, and glutamate 241. Positions 269 to 273 match the 'KMSKS' region motif; that stretch reads KMSKS. Lysine 272 provides a ligand contact to ATP.

The protein belongs to the class-I aminoacyl-tRNA synthetase family. Monomer. The cofactor is Zn(2+).

The protein localises to the cytoplasm. It carries out the reaction tRNA(Cys) + L-cysteine + ATP = L-cysteinyl-tRNA(Cys) + AMP + diphosphate. In Aromatoleum aromaticum (strain DSM 19018 / LMG 30748 / EbN1) (Azoarcus sp. (strain EbN1)), this protein is Cysteine--tRNA ligase.